A 361-amino-acid chain; its full sequence is Molybdenum import ATP-binding protein ModC (361 aa).

In terms of domain architecture, ABC transporter spans 1–235; sequence MDGLRLRFRR…VDLPLALDDD (235 aa). Position 33–40 (33–40) interacts with ATP; it reads GHSGSGKS. One can recognise a Mop domain in the interval 296–361; the sequence is QSSILNRLPV…AQIKSVAVLA (66 aa).

Belongs to the ABC transporter superfamily. Molybdate importer (TC 3.A.1.8) family. The complex is composed of two ATP-binding proteins (ModC), two transmembrane proteins (ModB) and a solute-binding protein (ModA).

It localises to the cell inner membrane. It catalyses the reaction molybdate(out) + ATP + H2O = molybdate(in) + ADP + phosphate + H(+). In terms of biological role, part of the ABC transporter complex ModABC involved in molybdenum import. Responsible for energy coupling to the transport system. This Pseudomonas aeruginosa (strain ATCC 15692 / DSM 22644 / CIP 104116 / JCM 14847 / LMG 12228 / 1C / PRS 101 / PAO1) protein is Molybdenum import ATP-binding protein ModC.